Consider the following 389-residue polypeptide: DEAD-box ATP-dependent RNA helicase CshC (389 aa).

The Q motif signature appears at 1–26 (MIKDMQPFLQQAWEKAGFKELTEIQK). The region spanning 29–199 (IPTILEGQDV…RDLAVEPQLV (171 aa)) is the Helicase ATP-binding domain. Residue 42–49 (SPTGTGKT) participates in ATP binding. A DEAD box motif is present at residues 147–150 (DEFD). Residues 209–379 (LVEHTYIICE…TKPKAPKKKK (171 aa)) form the Helicase C-terminal domain. The interval 368–389 (VETKPKAPKKKKPAFTGKKKPR) is disordered. Positions 373-389 (KAPKKKKPAFTGKKKPR) are enriched in basic residues.

It carries out the reaction ATP + H2O = ADP + phosphate + H(+). Functionally, DEAD-box RNA helicase. Probably has an RNA-dependent ATPase activity and a 3' to 5' RNA helicase activity that uses the energy of ATP hydrolysis to destabilize and unwind short RNA duplexes. The polypeptide is DEAD-box ATP-dependent RNA helicase CshC (cshC) (Bacillus cereus (strain ATCC 14579 / DSM 31 / CCUG 7414 / JCM 2152 / NBRC 15305 / NCIMB 9373 / NCTC 2599 / NRRL B-3711)).